The following is a 246-amino-acid chain: Transmembrane and ubiquitin-like domain-containing protein 1 (246 aa).

Positions 2–30 are required to release iHOPS from membranes; that stretch reads ALIEGVGDEVTILFSALACLLVLALAWVS. Residues 11–31 form a helical membrane-spanning segment; sequence VTILFSALACLLVLALAWVST. The segment at 35–102 is disordered; the sequence is EGADPLPQPS…PPPPDSPQEP (68 aa). A compositionally biased stretch (pro residues) spans 40 to 50; sequence LPQPSGTPTPT. Phosphothreonine occurs at positions 71 and 92. Residues serine 98 and serine 127 each carry the phosphoserine modification. One can recognise a Ubiquitin-like domain in the interval 103 to 176; the sequence is LVLRLKFLND…LHCHVSTRVG (74 aa). The next 2 membrane-spanning stretches (helical) occupy residues 195–215 and 221–241; these read VGSLLLPLLLLLLLLLWYCQI and FPLTATLGLAGFTLLLSLLAF.

Interacts with EEF1A1, GRIA2, GRIP1, CAMLG, TUBG1. Interacts with NPM1 and CDKN2A; TMUB1 can enhance interaction between NPM1 and CDKN2A and is proposed to bridge the proteins; proposed to be mediated by iHOPS. Interacts with ERLIN2 and AMFR; TMUB1 promotes the interaction of ERLIN2 with AMFR. Processed by regulated intramembrane proteolysis (RIP) in the N-terminus to release iHOPS from membranes.

It localises to the membrane. It is found in the postsynaptic cell membrane. The protein localises to the recycling endosome. The protein resides in the cytoplasm. Its subcellular location is the nucleus. It localises to the nucleolus. It is found in the cytoskeleton. The protein localises to the microtubule organizing center. The protein resides in the centrosome. Involved in sterol-regulated ubiquitination and degradation of HMG-CoA reductase HMGCR. Involved in positive regulation of AMPA-selective glutamate receptor GRIA2 recycling to the cell surface. Acts as negative regulator of hepatocyte growth during regeneration. In terms of biological role, may contribute to the regulation of translation during cell-cycle progression. May contribute to the regulation of cell proliferation. May be involved in centrosome assembly. Modulates stabilization and nucleolar localization of tumor suppressor CDKN2A and enhances association between CDKN2A and NPM1. The protein is Transmembrane and ubiquitin-like domain-containing protein 1 (TMUB1) of Bos taurus (Bovine).